The sequence spans 157 residues: Phosphopantetheine adenylyltransferase (157 aa).

A substrate-binding site is contributed by serine 8. ATP-binding positions include 8–9 and histidine 16; that span reads SF. The substrate site is built by lysine 40, leucine 72, and arginine 86. ATP contacts are provided by residues 87–89, glutamate 97, and 121–127; these read GLR and FGTISSS.

This sequence belongs to the bacterial CoaD family. As to quaternary structure, homohexamer. Requires Mg(2+) as cofactor.

The protein resides in the cytoplasm. It catalyses the reaction (R)-4'-phosphopantetheine + ATP + H(+) = 3'-dephospho-CoA + diphosphate. The protein operates within cofactor biosynthesis; coenzyme A biosynthesis; CoA from (R)-pantothenate: step 4/5. Its function is as follows. Reversibly transfers an adenylyl group from ATP to 4'-phosphopantetheine, yielding dephospho-CoA (dPCoA) and pyrophosphate. The protein is Phosphopantetheine adenylyltransferase of Cutibacterium acnes (strain DSM 16379 / KPA171202) (Propionibacterium acnes).